Here is a 221-residue protein sequence, read N- to C-terminus: Adenylate kinase (221 aa).

10–15 is an ATP binding site; sequence GAGKGT. Positions 30–59 are NMP; it reads STGDMLRAAVKARTELGVAAKKIMDAGGLV. Residues T31, R36, 57–59, 85–88, and Q92 each bind AMP; these read GLV and GFPR. An LID region spans residues 122–159; it reads GRRVHLASGRTYHIKFNPPKVEGKDDITGDPLIQRDDD. Residues R123 and 132–133 contribute to the ATP site; that span reads TY. R156 and R167 together coordinate AMP. Residue S207 coordinates ATP.

The protein belongs to the adenylate kinase family. Monomer.

It localises to the cytoplasm. The enzyme catalyses AMP + ATP = 2 ADP. It functions in the pathway purine metabolism; AMP biosynthesis via salvage pathway; AMP from ADP: step 1/1. In terms of biological role, catalyzes the reversible transfer of the terminal phosphate group between ATP and AMP. Plays an important role in cellular energy homeostasis and in adenine nucleotide metabolism. This chain is Adenylate kinase, found in Polynucleobacter necessarius subsp. necessarius (strain STIR1).